Here is a 352-residue protein sequence, read N- to C-terminus: Galactokinase (352 aa).

17–20 (EHTD) is a binding site for substrate. ATP is bound by residues S49 and 101–107 (GAGLSSS). Mg(2+)-binding residues include S107 and E139. D151 serves as the catalytic Proton acceptor. Residue Y200 participates in substrate binding.

The protein belongs to the GHMP kinase family. GalK subfamily. Monomer.

It is found in the cytoplasm. The catalysed reaction is alpha-D-galactose + ATP = alpha-D-galactose 1-phosphate + ADP + H(+). It participates in carbohydrate metabolism; galactose metabolism. Catalyzes the transfer of the gamma-phosphate of ATP to D-galactose to form alpha-D-galactose-1-phosphate (Gal-1-P). Is very specific for its substrate, since it is not able to use D-glucose, D-fructose, D-mannose, 2-deoxy-D-glucose, and D-glucosamine as substrates. In Pyrococcus furiosus (strain ATCC 43587 / DSM 3638 / JCM 8422 / Vc1), this protein is Galactokinase.